The following is a 301-amino-acid chain: G-protein coupled receptor homolog U51 (301 aa).

Residues 1–15 lie on the Extracellular side of the membrane; the sequence is MEKETKSLAWPATAE. Residues 16–36 form a helical membrane-spanning segment; that stretch reads FYGWVFIFSSIQLCTVVFLTV. Over 37–48 the chain is Cytoplasmic; sequence RFNGFKVGREYA. The chain crosses the membrane as a helical span at residues 49–69; sequence VFTFAGMSFNCFLLPIKMGLL. Topologically, residues 70–82 are extracellular; that stretch reads SGHWTLPRDFCAI. A helical transmembrane segment spans residues 83–103; the sequence is LLYIDDFSAYFSSWSLVFMAI. Topologically, residues 104 to 122 are cytoplasmic; sequence ERINYFCYSTPLLNENSKA. The helical transmembrane segment at 123-143 threads the bilayer; that stretch reads LAKVCFPIVWVVSGVQALQML. Topologically, residues 144-168 are extracellular; sequence NNYKATALQNETGQCFLAFLRSGHD. N-linked (GlcNAc...) asparagine; by host glycosylation occurs at N153. A helical membrane pass occupies residues 169–189; it reads MWLMLVYSVVIPVMLVFFYLY. The Cytoplasmic portion of the chain corresponds to 190 to 199; that stretch reads SKNFMLLKDE. Residues 200–220 form a helical membrane-spanning segment; it reads LSSVTTYLCIYLLLGTIAHLP. Topologically, residues 221–238 are extracellular; sequence KAALSEIESDKIFYGLRD. The chain crosses the membrane as a helical span at residues 239 to 259; sequence IFMALPVLKVYYISAMAYCMA. At 260–301 the chain is on the cytoplasmic side; sequence CDDHTVPVRLCSIWLVNLCKKCFSCTRREKGSDLEVGIKMLK.

It belongs to the G-protein coupled receptor 1 family.

It localises to the host cell membrane. The sequence is that of G-protein coupled receptor homolog U51 (U51) from Homo sapiens (Human).